The primary structure comprises 304 residues: ATP phosphoribosyltransferase (304 aa).

Belongs to the ATP phosphoribosyltransferase family. Long subfamily. The cofactor is Mg(2+).

The protein localises to the cytoplasm. It catalyses the reaction 1-(5-phospho-beta-D-ribosyl)-ATP + diphosphate = 5-phospho-alpha-D-ribose 1-diphosphate + ATP. Its pathway is amino-acid biosynthesis; L-histidine biosynthesis; L-histidine from 5-phospho-alpha-D-ribose 1-diphosphate: step 1/9. Feedback inhibited by histidine. In terms of biological role, catalyzes the condensation of ATP and 5-phosphoribose 1-diphosphate to form N'-(5'-phosphoribosyl)-ATP (PR-ATP). Has a crucial role in the pathway because the rate of histidine biosynthesis seems to be controlled primarily by regulation of HisG enzymatic activity. This is ATP phosphoribosyltransferase from Xylella fastidiosa (strain M12).